Here is a 73-residue protein sequence, read N- to C-terminus: UPF0235 protein PCC7424_0673 (73 aa).

It belongs to the UPF0235 family.

In Gloeothece citriformis (strain PCC 7424) (Cyanothece sp. (strain PCC 7424)), this protein is UPF0235 protein PCC7424_0673.